The chain runs to 491 residues: G2/mitotic-specific cyclin-2 (491 aa).

Serine 2 bears the N-acetylserine mark. Disordered regions lie at residues 59–107 (EGSR…DPSS) and 164–184 (HPAR…SGKK). Positions 67 to 77 (TRESVSRSTAA) are enriched in polar residues.

This sequence belongs to the cyclin family. Cyclin AB subfamily. Interacts with NAP1.

Functionally, essential for the control of the cell cycle at the G2/M (mitosis) transition. Interacts with the CDC2 protein kinase to form MPF. G2/M cyclins accumulate steadily during G2 and are abruptly destroyed at mitosis. This chain is G2/mitotic-specific cyclin-2 (CLB2), found in Saccharomyces cerevisiae (strain ATCC 204508 / S288c) (Baker's yeast).